Reading from the N-terminus, the 262-residue chain is 3-methyl-2-oxobutanoate hydroxymethyltransferase (262 aa).

Residues Asp-42 and Asp-81 each coordinate Mg(2+). 3-methyl-2-oxobutanoate is bound by residues 42-43 (DS), Asp-81, and Lys-110. Glu-112 is a Mg(2+) binding site. Glu-180 (proton acceptor) is an active-site residue.

The protein belongs to the PanB family. In terms of assembly, homodecamer; pentamer of dimers. Mg(2+) serves as cofactor.

The protein localises to the cytoplasm. The enzyme catalyses 3-methyl-2-oxobutanoate + (6R)-5,10-methylene-5,6,7,8-tetrahydrofolate + H2O = 2-dehydropantoate + (6S)-5,6,7,8-tetrahydrofolate. The protein operates within cofactor biosynthesis; (R)-pantothenate biosynthesis; (R)-pantoate from 3-methyl-2-oxobutanoate: step 1/2. Catalyzes the reversible reaction in which hydroxymethyl group from 5,10-methylenetetrahydrofolate is transferred onto alpha-ketoisovalerate to form ketopantoate. In Legionella pneumophila subsp. pneumophila (strain Philadelphia 1 / ATCC 33152 / DSM 7513), this protein is 3-methyl-2-oxobutanoate hydroxymethyltransferase.